A 231-amino-acid chain; its full sequence is MSACPCNIVILPVEILKNSSKDTKYSLYTTINRGYDVPRLKYGIIVSPRVHSLETLFSDLGFDKNIEKSSLYLLLNDPTLAYPNFHEHFEQLKGETNKDLSLPTYYIPKVQFLTEAFDSEHTLATIGYKPNNKESYEITGFTSMGNGYGIKLFNYSVIHMMRSHKCKRVVADIIMEHDLLGYYEKKLGFVEVQRFKVLKEQHQVKVFDDKVDFTKDFHVIKMIKELGNHRL.

It is found in the peroxisome. Functionally, required for sporulation. Required for meiotic nuclear division. This chain is Sporulation protein RMD6 (RMD6), found in Saccharomyces cerevisiae (strain ATCC 204508 / S288c) (Baker's yeast).